A 336-amino-acid polypeptide reads, in one-letter code: Protein YIPF3 (336 aa).

Residues 1–73 are disordered; sequence MSAPGGGRSG…AGAGGEEDGE (73 aa). Topologically, residues 1 to 143 are cytoplasmic; it reads MSAPGGGRSG…PVKMINFPQK (143 aa). A compositionally biased stretch (acidic residues) spans 55–73; it reads EEEEEAEGEAGAGGEEDGE. The helical transmembrane segment at 144 to 164 threads the bilayer; it reads IAGELYGPLMLVFTLVAILLH. The Lumenal segment spans residues 165–182; the sequence is GMKTSDTIIREGTLMGTA. A helical transmembrane segment spans residues 183–203; it reads IGTCFGYWLGVSSFIYFLAYL. The Cytoplasmic segment spans residues 204 to 209; that stretch reads CNAQIT. Residues 210–230 traverse the membrane as a helical segment; that stretch reads MVQMLSLLGYGLFGHCITLLV. Residues 231 to 239 lie on the Lumenal side of the membrane; the sequence is TYNIHFHSL. The chain crosses the membrane as a helical span at residues 240–260; the sequence is FYIFWLVVGGLSTLRMVAVLV. The Cytoplasmic portion of the chain corresponds to 261–269; it reads SRTVGHTQR. The chain crosses the membrane as a helical span at residues 270–290; that stretch reads LILCGTLAALHMLFLLYLHFA. Over 291–336 the chain is Lumenal; that stretch reads YHKVVEGILDTLEGPNMPPFQRVARDIPVVSNAVLNTTAKANAMTL. N326 is a glycosylation site (N-linked (GlcNAc...) asparagine).

It belongs to the YIP1 family.

The protein localises to the cell membrane. The protein resides in the golgi apparatus. Its subcellular location is the cis-Golgi network membrane. It localises to the cytoplasm. Functionally, involved in the maintenance of the Golgi structure. May play a role in hematopoiesis. This is Protein YIPF3 (YIPF3) from Gallus gallus (Chicken).